A 305-amino-acid polypeptide reads, in one-letter code: NDP-polyphosphate phosphotransferase 1 (305 aa).

Belongs to the polyphosphate kinase 2 (PPK2) family. Class I subfamily.

The catalysed reaction is [phosphate](n) + ATP = [phosphate](n+1) + ADP. It catalyses the reaction [phosphate](n) + CTP = [phosphate](n+1) + CDP. It carries out the reaction [phosphate](n) + GTP = [phosphate](n+1) + GDP. The enzyme catalyses [phosphate](n) + UTP = [phosphate](n+1) + UDP. Shows little dependence on metals. Functionally, uses inorganic polyphosphate (polyP) as a donor to convert NDP to NTP. PolyP hydrolysis is slightly faster with GDP, but it can also use ADP, CDP and UDP. The polypeptide is NDP-polyphosphate phosphotransferase 1 (Ruegeria pomeroyi (strain ATCC 700808 / DSM 15171 / DSS-3) (Silicibacter pomeroyi)).